Reading from the N-terminus, the 449-residue chain is Myb family transcription factor PHL6 (449 aa).

Positions 49 to 72 (PFIRSQSPDSPGQLWPKNSSQSTF) are disordered. An HTH myb-type domain is found at 238–298 (ANQKSRMRWT…HLQKYRLAKY (61 aa)). The H-T-H motif DNA-binding region spans 269–294 (PKAVKKLMNVEGLTIYHVKSHLQKYR). The interval 301–327 (EKKEEKRTDNSEEKKLALSKSEADEKK) is disordered. The interval 334-354 (TEALRMQMEVQKQLHEQLEVQ) is coiled coil. The short motif at 347–352 (LHEQLE) is the LHEQLE element. The tract at residues 376-449 (RKTGRWISSS…NIAESEDPKR (74 aa)) is disordered. Over residues 381–410 (WISSSSQTVLSPSDDSIPDSQNMSKTKASS) the composition is skewed to polar residues.

This sequence belongs to the MYB-CC family.

It is found in the nucleus. The chain is Myb family transcription factor PHL6 from Arabidopsis thaliana (Mouse-ear cress).